An 880-amino-acid chain; its full sequence is Alanine--tRNA ligase (880 aa).

Positions 571, 575, 673, and 677 each coordinate Zn(2+).

The protein belongs to the class-II aminoacyl-tRNA synthetase family. The cofactor is Zn(2+).

Its subcellular location is the cytoplasm. The catalysed reaction is tRNA(Ala) + L-alanine + ATP = L-alanyl-tRNA(Ala) + AMP + diphosphate. In terms of biological role, catalyzes the attachment of alanine to tRNA(Ala) in a two-step reaction: alanine is first activated by ATP to form Ala-AMP and then transferred to the acceptor end of tRNA(Ala). Also edits incorrectly charged Ser-tRNA(Ala) and Gly-tRNA(Ala) via its editing domain. The protein is Alanine--tRNA ligase of Oleidesulfovibrio alaskensis (strain ATCC BAA-1058 / DSM 17464 / G20) (Desulfovibrio alaskensis).